The following is a 612-amino-acid chain: UvrABC system protein C (612 aa).

The GIY-YIG domain occupies 20 to 98 (THSGVYRMLD…IKQHRPKYNI (79 aa)). The UVR domain occupies 208–243 (SSVLEEISAKMYQASEDMEYEKAQVYRDQLVVLRKL).

Belongs to the UvrC family. As to quaternary structure, interacts with UvrB in an incision complex.

It is found in the cytoplasm. In terms of biological role, the UvrABC repair system catalyzes the recognition and processing of DNA lesions. UvrC both incises the 5' and 3' sides of the lesion. The N-terminal half is responsible for the 3' incision and the C-terminal half is responsible for the 5' incision. The polypeptide is UvrABC system protein C (Francisella tularensis subsp. holarctica (strain FTNF002-00 / FTA)).